Here is a 562-residue protein sequence, read N- to C-terminus: NAD-dependent malic enzyme (562 aa).

Y101 functions as the Proton donor in the catalytic mechanism. Residue R154 participates in NAD(+) binding. K172 functions as the Proton acceptor in the catalytic mechanism. Positions 243, 244, and 267 each coordinate a divalent metal cation. 2 residues coordinate NAD(+): D267 and N415.

The protein belongs to the malic enzymes family. In terms of assembly, homotetramer. The cofactor is Mg(2+). Requires Mn(2+) as cofactor.

It carries out the reaction (S)-malate + NAD(+) = pyruvate + CO2 + NADH. The enzyme catalyses oxaloacetate + H(+) = pyruvate + CO2. In Shewanella woodyi (strain ATCC 51908 / MS32), this protein is NAD-dependent malic enzyme.